The following is a 338-amino-acid chain: Heat-inducible transcription repressor HrcA (338 aa).

The protein belongs to the HrcA family.

In terms of biological role, negative regulator of class I heat shock genes (grpE-dnaK-dnaJ and groELS operons). Prevents heat-shock induction of these operons. This Thermotoga sp. (strain RQ2) protein is Heat-inducible transcription repressor HrcA.